The sequence spans 364 residues: Long-wave-sensitive opsin 1 (364 aa).

Residues 1-23 (MAQQWSLQRLAGRHPQDSYEDST) are disordered. At 1 to 52 (MAQQWSLQRLAGRHPQDSYEDSTQSSIFTYTNSNSTRGPFEGPNYHIAPRWV) the chain is on the extracellular side. A glycan (O-linked (GlcNAc) serine) is linked at Ser22. The N-linked (GlcNAc...) asparagine glycan is linked to Asn34. The chain crosses the membrane as a helical span at residues 53-77 (YHLTSVWMIFVVTASVFTNGLVLAA). Residues 78–89 (TMKFKKLRHPLN) lie on the Cytoplasmic side of the membrane. A helical transmembrane segment spans residues 90–115 (WILVNLAVADLAETVIASTISIVNQV). Residues 116–129 (SGYFVLGHPMCVLE) lie on the Extracellular side of the membrane. A disulfide bridge connects residues Cys126 and Cys203. Residues 130–149 (GYTVSLCGITGLWSLAIISW) traverse the membrane as a helical segment. The Cytoplasmic segment spans residues 150-168 (ERWMVVCKPFGNVRFDAKL). The chain crosses the membrane as a helical span at residues 169 to 192 (AIVGIAFSWIWAAVWTAPPIFGWS). The Extracellular segment spans residues 193-218 (RYWPHGLKTSCGPDVFSGSSYPGVQS). The helical transmembrane segment at 219 to 246 (YMIVLMVTCCIIPLAIIMLCYLQVWLAI) threads the bilayer. At 247–268 (RAVAKQQKESESTQKAEKEVTR) the chain is on the cytoplasmic side. The helical transmembrane segment at 269 to 292 (MVVVMIFAYCVCWGPYTFFACFAA) threads the bilayer. Over 293 to 300 (ANPGYAFH) the chain is Extracellular. Residues 301–325 (PLMAALPAYFAKSATIYNPVIYVFM) traverse the membrane as a helical segment. Residue Lys312 is modified to N6-(retinylidene)lysine. Residues 326 to 364 (NRQFRNCILQLFGKKVDDGSELSSASKTEVSSVSSVSPA) are Cytoplasmic-facing.

This sequence belongs to the G-protein coupled receptor 1 family. Opsin subfamily. Phosphorylated on some or all of the serine and threonine residues present in the C-terminal region. As to expression, the three color pigments are found in the cone photoreceptor cells.

It is found in the membrane. Its function is as follows. Visual pigments are the light-absorbing molecules that mediate vision. They consist of an apoprotein, opsin, covalently linked to cis-retinal. The protein is Long-wave-sensitive opsin 1 (OPN1LW) of Homo sapiens (Human).